A 505-amino-acid polypeptide reads, in one-letter code: Hexose transporter 1 (505 aa).

The Cytoplasmic portion of the chain corresponds to 1-27 (MNILRMDILSRGGTQEIEHRDGFFNTS). The helical transmembrane segment at 28–48 (FQYVLSACLASFIFGYQVSVL) threads the bilayer. The Extracellular segment spans residues 49-78 (NTIKSYIVVEFEWCSTKTDTSCEDSILKSS). Cys62 and Cys70 are oxidised to a cystine. Residues 79-99 (FLLASVFIGAVLGSGFSGYLV) form a helical membrane-spanning segment. Residues 100 to 104 (KFGRR) lie on the Cytoplasmic side of the membrane. Residues 105–125 (FSLMVIYIFFIFVSILTAISH) form a helical membrane-spanning segment. Residues 126–134 (HFHTILYAR) lie on the Extracellular side of the membrane. Residues 135 to 155 (LLSGFGIGLITVSVPMYISEM) form a helical membrane-spanning segment. At 156–165 (THKDKKGAYG) the chain is on the cytoplasmic side. A helical transmembrane segment spans residues 166 to 186 (VLHQLFITFGIFVAVLLGLFL). Alpha-D-glucose is bound at residue Gln169. Gln169 contributes to the beta-D-glucose binding site. Over 187 to 208 (GDGPKINGKSIELSNFEMFWWR) the chain is Extracellular. A helical transmembrane segment spans residues 209-229 (FMFFLPTIISLLGIILLIAFY). Topologically, residues 230–294 (KEETPYFLYE…SALKIPAYRN (65 aa)) are cytoplasmic. Residues 295–315 (VIILGCILSGFQQFTGINVLV) traverse the membrane as a helical segment. Alpha-D-glucose-binding residues include Gln306, Gln307, and Asn312. Gln306 serves as a coordination point for beta-D-glucose. Asn312 contributes to the beta-D-glucose binding site. Residues 316 to 332 (ANSNELYKEFLDKNLIT) lie on the Extracellular side of the membrane. The chain crosses the membrane as a helical span at residues 333–353 (ILSVIMTAVNFLMTFPAIYII). Asn342 contacts beta-D-glucose. The Cytoplasmic portion of the chain corresponds to 354–358 (EKIGR). Residues 359-379 (KTLLLGGCIGVICAFLPTVIA) form a helical membrane-spanning segment. At 380–393 (RQVWGPTKIVNGLS) the chain is on the extracellular side. A helical membrane pass occupies residues 394–414 (IAGTFLMIISFAVSYGPVLWI). Residue Trp413 participates in alpha-D-glucose binding. Over 415–430 (YLHEMYPSEIKDSAAS) the chain is Cytoplasmic. Residues 431 to 451 (LASLINWVCAIIVVFPSDIII) form a helical membrane-spanning segment. Topologically, residues 452–456 (KKSPS) are extracellular. A helical membrane pass occupies residues 457-477 (ILFMFFSVMCIIAFLFIMFFI). Topologically, residues 478-505 (KETKGGEIGTSPYISLEERQKHIGKSKV) are cytoplasmic.

This sequence belongs to the major facilitator superfamily. Sugar transporter (TC 2.A.1.1) family. In terms of assembly, homodimer.

The protein resides in the cell membrane. The enzyme catalyses D-glucose(out) = D-glucose(in). The catalysed reaction is D-fructose(out) = D-fructose(in). It catalyses the reaction D-galactose(in) = D-galactose(out). It carries out the reaction D-mannose(out) = D-mannose(in). The enzyme catalyses D-glucosamine(out) = D-glucosamine(in). The catalysed reaction is D-xylose(out) = D-xylose(in). Inhibited by cytochalasin B. Sodium-independent facilitative hexose transporter. Can transport D-glucose and D-fructose. Can transport D-mannose, D-galactose, D-xylose and D-glucosamine. The chain is Hexose transporter 1 from Plasmodium yoelii yoelii.